The following is a 444-amino-acid chain: Methylenetetrahydrofolate--tRNA-(uracil-5-)-methyltransferase TrmFO (444 aa).

10–15 (GAGLAG) provides a ligand contact to FAD.

It belongs to the MnmG family. TrmFO subfamily. The cofactor is FAD.

The protein localises to the cytoplasm. It carries out the reaction uridine(54) in tRNA + (6R)-5,10-methylene-5,6,7,8-tetrahydrofolate + NADH + H(+) = 5-methyluridine(54) in tRNA + (6S)-5,6,7,8-tetrahydrofolate + NAD(+). The enzyme catalyses uridine(54) in tRNA + (6R)-5,10-methylene-5,6,7,8-tetrahydrofolate + NADPH + H(+) = 5-methyluridine(54) in tRNA + (6S)-5,6,7,8-tetrahydrofolate + NADP(+). Catalyzes the folate-dependent formation of 5-methyl-uridine at position 54 (M-5-U54) in all tRNAs. This chain is Methylenetetrahydrofolate--tRNA-(uracil-5-)-methyltransferase TrmFO, found in Streptococcus pneumoniae (strain 70585).